The chain runs to 180 residues: ATP-dependent protease subunit HslV (180 aa).

Thr-5 is an active-site residue. The Na(+) site is built by Gly-161, Cys-164, and Thr-167.

This sequence belongs to the peptidase T1B family. HslV subfamily. As to quaternary structure, a double ring-shaped homohexamer of HslV is capped on each side by a ring-shaped HslU homohexamer. The assembly of the HslU/HslV complex is dependent on binding of ATP.

It localises to the cytoplasm. The enzyme catalyses ATP-dependent cleavage of peptide bonds with broad specificity.. Allosterically activated by HslU binding. In terms of biological role, protease subunit of a proteasome-like degradation complex believed to be a general protein degrading machinery. The chain is ATP-dependent protease subunit HslV from Campylobacter jejuni subsp. jejuni serotype O:2 (strain ATCC 700819 / NCTC 11168).